The chain runs to 42 residues: Photosystem I reaction center subunit IX (42 aa).

Residues 7–27 (YLSAAPVLSTLWLGALAALLI) traverse the membrane as a helical segment.

This sequence belongs to the PsaJ family.

The protein localises to the plastid membrane. Its function is as follows. May help in the organization of the PsaE and PsaF subunits. This is Photosystem I reaction center subunit IX from Cuscuta reflexa (Southern Asian dodder).